Consider the following 1637-residue polypeptide: Kinesin-like protein KIF21B (1637 aa).

One can recognise a Kinesin motor domain in the interval 8–370 (CVKVAVRIRP…LKYANRARNI (363 aa)). ATP is bound at residue 87–94 (GQTGAGKT). 2 coiled-coil regions span residues 376 to 604 (VNQD…EEEG) and 631 to 824 (NFQA…ALRR). Residues 400 to 1099 (MEYKAGKRVI…LQALIYNVQQ (700 aa)) are interaction with TRIM3. Residues 509 to 533 (ASARSPYSLGASPAAPAFGGSPASS) are compositionally biased toward low complexity. 2 disordered regions span residues 509–538 (ASARSPYSLGASPAAPAFGGSPASSMEDAS) and 552–628 (KKKE…PEEK). Acidic residues predominate over residues 578 to 627 (NSEETDENEAEEEEEERDESGCEEEEGREDEDEDSGSEESLVDSDSDPEE). Residue Ser-579 is modified to Phosphoserine. At Thr-582 the chain carries Phosphothreonine. 2 disordered regions span residues 830–865 (SERVAGRAGLKPPMLDSGAEVSASTTSSEAESGARS) and 880–906 (FLGDHPAPTVNGTRPARKKFQKKGASQ). Over residues 846-865 (SGAEVSASTTSSEAESGARS) the composition is skewed to low complexity. Residues 928-1016 (MQRMTIVNLE…EETKEELDST (89 aa)) are a coiled coil. Phosphoserine is present on residues Ser-1149, Ser-1167, and Ser-1215. Residues 1194-1217 (RTVSLPTRGSTFPRQSRATETSPL) are compositionally biased toward polar residues. Residues 1194–1251 (RTVSLPTRGSTFPRQSRATETSPLTRRKSYDRGQPIRSTDVGFTPPSSPPTRPRNDRN) form a disordered region. Thr-1237 carries the post-translational modification Phosphothreonine. At Ser-1241 the chain carries Phosphoserine. WD repeat units follow at residues 1306 to 1343 (GHTKPILCLDATDELLFTGSKDRSCKMWNLVTGQEIAA), 1346 to 1384 (GHPNNVVSIKYCSHSGLVFSVSTSYIKVWDIRDSAKCIR), 1410 to 1448 (QGEHQINQIALSPSGTMLYAASGNAVRIWELSRFQPVGK), 1451 to 1493 (GHIG…TGTI), 1502 to 1539 (PHYDGIECLAIQGDILFSGSRDNGIKKWDLDQQELIQQ), 1543 to 1582 (AHKDWVCALAFIPGRPMLLSACRAGVIKVWNVDNFTPIGE), and 1585 to 1622 (GHDSPINAICTNAKHIFTASSDCRVKLWNYVPGLTPCL).

Belongs to the TRAFAC class myosin-kinesin ATPase superfamily. Kinesin family. Interacts with TRIM3; the interaction positively affects motility of KIF21B. Interacts with GABARAP and GABA(A) receptor subunits: GABRG2, GABRA1 and GABRA2. May interact with GABA(A) receptor subunits: GABRB2 and GABRB3.

The protein resides in the cytoplasm. Its subcellular location is the cytoskeleton. The protein localises to the cell projection. It localises to the dendrite. It is found in the growth cone. The protein resides in the axon. Its subcellular location is the cytoplasmic vesicle. Functionally, plus-end directed microtubule-dependent motor protein which displays processive activity. Is involved in regulation of microtubule dynamics, synapse function and neuronal morphology, including dendritic tree branching and spine formation. Plays a role in lerning and memory. Involved in delivery of gamma-aminobutyric acid (GABA(A)) receptor to cell surface. The chain is Kinesin-like protein KIF21B (KIF21B) from Homo sapiens (Human).